The chain runs to 519 residues: Apolipoprotein N-acyltransferase (519 aa).

Helical transmembrane passes span 6 to 26 (APLG…IWIF), 47 to 67 (LTAI…ITGV), 83 to 103 (IAAF…FVWL), 126 to 146 (LFIL…SHSI), 174 to 194 (LLSA…IDFL), and 206 to 226 (WHYF…GWLL). Residues 244–482 (IQGNIPNQIK…YEIHAAPIYR (239 aa)) form the CN hydrolase domain. Glu-285 (proton acceptor) is an active-site residue. Residue Lys-343 is part of the active site. Residue Cys-394 is the Nucleophile of the active site. The chain crosses the membrane as a helical span at residues 496–516 (VVFLLLVVSAIAWLYQIVFPL).

Belongs to the CN hydrolase family. Apolipoprotein N-acyltransferase subfamily.

Its subcellular location is the cell inner membrane. It carries out the reaction N-terminal S-1,2-diacyl-sn-glyceryl-L-cysteinyl-[lipoprotein] + a glycerophospholipid = N-acyl-S-1,2-diacyl-sn-glyceryl-L-cysteinyl-[lipoprotein] + a 2-acyl-sn-glycero-3-phospholipid + H(+). It functions in the pathway protein modification; lipoprotein biosynthesis (N-acyl transfer). In terms of biological role, catalyzes the phospholipid dependent N-acylation of the N-terminal cysteine of apolipoprotein, the last step in lipoprotein maturation. In Synechocystis sp. (strain ATCC 27184 / PCC 6803 / Kazusa), this protein is Apolipoprotein N-acyltransferase.